Consider the following 675-residue polypeptide: L-type lectin-domain containing receptor kinase IX.2 (675 aa).

The signal sequence occupies residues 1–35 (MLYFIFCQNLSSSSSMSNSILFLSLFLFLPFVVDS). N9, N39, N110, N146, N179, N186, N191, and N212 each carry an N-linked (GlcNAc...) asparagine glycan. The segment at 36-269 (LYFNFTSFRQ…EEHRLLSWEL (234 aa)) is legume-lectin like. The Extracellular portion of the chain corresponds to 36 to 281 (LYFNFTSFRQ…SLDSDKADSR (246 aa)). A helical membrane pass occupies residues 282–302 (IGLVIGISASGFVFLTFMVIT). Over 303 to 675 (TVVVWSRKQR…VTFSGIEYGR (373 aa)) the chain is Cytoplasmic. Positions 350-631 (FSSHRKLGEG…KQGIQVMNFE (282 aa)) constitute a Protein kinase domain. ATP contacts are provided by residues 356 to 364 (LGEGGFGAV) and K379. The Proton acceptor role is filled by D475.

The protein in the C-terminal section; belongs to the protein kinase superfamily. Ser/Thr protein kinase family. This sequence in the N-terminal section; belongs to the leguminous lectin family. Interacts with ABCG40.

The protein localises to the cell membrane. It carries out the reaction L-seryl-[protein] + ATP = O-phospho-L-seryl-[protein] + ADP + H(+). The catalysed reaction is L-threonyl-[protein] + ATP = O-phospho-L-threonyl-[protein] + ADP + H(+). Promotes hydrogen peroxide H(2)O(2) production and cell death. Its function is as follows. Involved in resistance response to the pathogenic oomycetes Phytophthora infestans and Phytophthora capsici. This is L-type lectin-domain containing receptor kinase IX.2 from Arabidopsis thaliana (Mouse-ear cress).